The chain runs to 334 residues: F-box only protein 16 (334 aa).

Positions 86-132 constitute an F-box domain; sequence LDFTTKLPRVLSVYIFSFLDPRSLCRCAQVSWYWKSLAELDQLWMLK. Disordered regions lie at residues 168–222 and 314–334; these read PKTP…WRSS and LEHLQKHPGLQSPSPRLQSQS. Over residues 194 to 204 the composition is skewed to low complexity; it reads SPSLAFRSSSS. Residues 210 to 222 show a composition bias toward basic and acidic residues; the sequence is NPGEKELPPWRSS. Residues 323–334 show a composition bias toward low complexity; that stretch reads LQSPSPRLQSQS.

In terms of assembly, part of a SCF (SKP1-cullin-F-box) protein ligase complex.

In terms of biological role, probably recognizes and binds to some phosphorylated proteins and promotes their ubiquitination and degradation. The chain is F-box only protein 16 (Fbxo16) from Mus musculus (Mouse).